Here is a 311-residue protein sequence, read N- to C-terminus: Lipoyl synthase (311 aa).

Cys58, Cys63, Cys69, Cys84, Cys88, Cys91, and Ser298 together coordinate [4Fe-4S] cluster. The region spanning 70–287 is the Radical SAM core domain; sequence FGHGTATFMI…EQEALAMGFR (218 aa).

It belongs to the radical SAM superfamily. Lipoyl synthase family. It depends on [4Fe-4S] cluster as a cofactor.

It is found in the cytoplasm. It catalyses the reaction [[Fe-S] cluster scaffold protein carrying a second [4Fe-4S](2+) cluster] + N(6)-octanoyl-L-lysyl-[protein] + 2 oxidized [2Fe-2S]-[ferredoxin] + 2 S-adenosyl-L-methionine + 4 H(+) = [[Fe-S] cluster scaffold protein] + N(6)-[(R)-dihydrolipoyl]-L-lysyl-[protein] + 4 Fe(3+) + 2 hydrogen sulfide + 2 5'-deoxyadenosine + 2 L-methionine + 2 reduced [2Fe-2S]-[ferredoxin]. Its pathway is protein modification; protein lipoylation via endogenous pathway; protein N(6)-(lipoyl)lysine from octanoyl-[acyl-carrier-protein]: step 2/2. In terms of biological role, catalyzes the radical-mediated insertion of two sulfur atoms into the C-6 and C-8 positions of the octanoyl moiety bound to the lipoyl domains of lipoate-dependent enzymes, thereby converting the octanoylated domains into lipoylated derivatives. The protein is Lipoyl synthase of Thiobacillus denitrificans (strain ATCC 25259 / T1).